The primary structure comprises 407 residues: Argininosuccinate synthase (407 aa).

Residues 12–20 (AYSGGLDTS) and alanine 39 each bind ATP. Tyrosine 92 and serine 97 together coordinate L-citrulline. Residue glycine 122 participates in ATP binding. 3 residues coordinate L-aspartate: threonine 124, asparagine 128, and aspartate 129. Position 128 (asparagine 128) interacts with L-citrulline. Arginine 132, serine 183, serine 192, glutamate 268, and tyrosine 280 together coordinate L-citrulline.

The protein belongs to the argininosuccinate synthase family. Type 1 subfamily. Homotetramer.

The protein localises to the cytoplasm. The enzyme catalyses L-citrulline + L-aspartate + ATP = 2-(N(omega)-L-arginino)succinate + AMP + diphosphate + H(+). It functions in the pathway amino-acid biosynthesis; L-arginine biosynthesis; L-arginine from L-ornithine and carbamoyl phosphate: step 2/3. This Caulobacter sp. (strain K31) protein is Argininosuccinate synthase.